Here is a 542-residue protein sequence, read N- to C-terminus: Sensory neuron membrane protein 2 (542 aa).

The Extracellular segment spans residues 1–487 (MMVMNTELRQ…MKVLTLLDIV (487 aa)). N-linked (GlcNAc...) asparagine glycans are attached at residues asparagine 33, asparagine 128, asparagine 238, and asparagine 274. 3 cysteine pairs are disulfide-bonded: cysteine 283-cysteine 351, cysteine 312-cysteine 378, and cysteine 353-cysteine 367. The chain crosses the membrane as a helical span at residues 488–508 (QWVMIGSGLLLAIIMPIVYFI). Residues 509–542 (KRRPSSGSITPTLTTTTSTVSISDGGGLGGNPQK) are Cytoplasmic-facing.

The protein belongs to the CD36 family. Detected in the antenna, legs and wings. Higher levels of expression detected in male compared to female.

The protein resides in the cell membrane. Its function is as follows. Plays an olfactory role that is not restricted to pheromone sensitivity. This chain is Sensory neuron membrane protein 2, found in Aedes aegypti (Yellowfever mosquito).